A 314-amino-acid chain; its full sequence is MRALVTGAAGFIGSTLVDRLLADGHSVVGLDNFATGRATNLEHLADNSAHVFVEADIVTADLHAILEQHRPEVVFHLAAQIDVRRSVADPQFDAAVNVIGTVRLAEAARQTGVRKIVHTSSGGSIYGTPPEYPTPETAPTDPASPYAAGKVAGEIYLNTFRHLYGLDCSHIAPANVYGPRQDPHGEAGVVAIFAQALLSGKPTRVFGDGTNTRDYVFVDDVVDAFVRVSADVGGGLRFNIGTGKETSDRQLHSAVAAAVGGPDDPEFHPPRLGDLKRSCLDIGLAERVLGWRPQIELADGVRRTVEYFRHKHTD.

Residues 11–12 (FI), 31–36 (DNFATG), 56–57 (DI), and 77–81 (LAAQI) contribute to the NAD(+) site. Substrate-binding residues include Ser121 and Tyr146. 2 residues coordinate NAD(+): Tyr146 and Lys150. The Proton acceptor role is filled by Tyr146. Residues Asn175, 189 to 190 (VV), 204 to 206 (RVF), Arg213, and 271 to 274 (RLGD) contribute to the substrate site.

Belongs to the NAD(P)-dependent epimerase/dehydratase family. As to quaternary structure, homodimer. The cofactor is NAD(+).

It carries out the reaction UDP-alpha-D-glucose = UDP-alpha-D-galactose. It functions in the pathway carbohydrate metabolism; galactose metabolism. In terms of biological role, involved in the metabolism of galactose. Catalyzes the conversion of UDP-galactose (UDP-Gal) to UDP-glucose (UDP-Glc) through a mechanism involving the transient reduction of NAD. This is UDP-glucose 4-epimerase (galE1) from Mycobacterium tuberculosis (strain CDC 1551 / Oshkosh).